Here is a 506-residue protein sequence, read N- to C-terminus: Galactose/methyl galactoside import ATP-binding protein MglA (506 aa).

2 consecutive ABC transporter domains span residues L14 to S249 and V264 to L506. G46–S53 contributes to the ATP binding site.

The protein belongs to the ABC transporter superfamily. Galactose/methyl galactoside importer (TC 3.A.1.2.3) family. The complex is composed of one ATP-binding protein (MglA), two transmembrane proteins (MglC) and a solute-binding protein (MglB).

The protein localises to the cell inner membrane. It carries out the reaction D-galactose(out) + ATP + H2O = D-galactose(in) + ADP + phosphate + H(+). It catalyses the reaction methyl beta-D-galactoside(out) + ATP + H2O = methyl beta-D-galactoside(in) + ADP + phosphate + H(+). In terms of biological role, part of the ABC transporter complex MglABC involved in galactose/methyl galactoside import. Responsible for energy coupling to the transport system. The chain is Galactose/methyl galactoside import ATP-binding protein MglA from Escherichia coli O157:H7.